Reading from the N-terminus, the 193-residue chain is 21 kDa protein (193 aa).

Positions 1 to 22 are cleaved as a signal peptide; sequence MKLSKSTLVFSALLVILAAASA.

The polypeptide is 21 kDa protein (Daucus carota (Wild carrot)).